A 507-amino-acid polypeptide reads, in one-letter code: Maturase K (507 aa).

This sequence belongs to the intron maturase 2 family. MatK subfamily.

The protein resides in the plastid. It is found in the chloroplast. In terms of biological role, usually encoded in the trnK tRNA gene intron. Probably assists in splicing its own and other chloroplast group II introns. The polypeptide is Maturase K (Umbellularia californica (California bay laurel)).